The sequence spans 256 residues: UPF0280 protein MTH_727 (256 aa).

It belongs to the UPF0280 family.

The chain is UPF0280 protein MTH_727 from Methanothermobacter thermautotrophicus (strain ATCC 29096 / DSM 1053 / JCM 10044 / NBRC 100330 / Delta H) (Methanobacterium thermoautotrophicum).